A 389-amino-acid polypeptide reads, in one-letter code: Probable protein phosphatase 2C 47 (389 aa).

One can recognise a PPM-type phosphatase domain in the interval 76 to 346 (RSGSFADIGP…DNLTVIVVCF (271 aa)). Residues Asp120, Gly121, Asp294, and Asp337 each contribute to the Mn(2+) site.

This sequence belongs to the PP2C family. Mg(2+) is required as a cofactor. It depends on Mn(2+) as a cofactor.

The catalysed reaction is O-phospho-L-seryl-[protein] + H2O = L-seryl-[protein] + phosphate. It catalyses the reaction O-phospho-L-threonyl-[protein] + H2O = L-threonyl-[protein] + phosphate. The chain is Probable protein phosphatase 2C 47 from Oryza sativa subsp. japonica (Rice).